A 177-amino-acid chain; its full sequence is ECF RNA polymerase sigma factor SigL (177 aa).

A sigma-70 factor domain-2 region spans residues 18 to 85 (LYDEHAAVLW…MIIDERRSAR (68 aa)). An Interaction with polymerase core subunit RpoC motif is present at residues 42 to 45 (DVVQ). The segment at 119–167 (ALAQLSAEHRAVIQRSYYRGWSTAQIATDLGIAEGTVKSRLHYAVRALR) is sigma-70 factor domain-4. The segment at residues 141-160 (TAQIATDLGIAEGTVKSRLH) is a DNA-binding region (H-T-H motif).

It belongs to the sigma-70 factor family. ECF subfamily. In terms of assembly, interacts transiently with the RNA polymerase catalytic core formed by RpoA, RpoB, RpoC and RpoZ (2 alpha, 1 beta, 1 beta' and 1 omega subunit) to form the RNA polymerase holoenzyme that can initiate transcription. Interacts (via sigma-70 factor domain 4) with anti-sigma-L factor RslA.

Functionally, sigma factors are initiation factors that promote the attachment of RNA polymerase to specific initiation sites and are then released. Extracytoplasmic function (ECF) sigma factors are held in an inactive form by an anti-sigma factor until released by regulated intramembrane proteolysis. In Mycobacterium tuberculosis (strain ATCC 35801 / TMC 107 / Erdman), this protein is ECF RNA polymerase sigma factor SigL (sigL).